Here is a 237-residue protein sequence, read N- to C-terminus: Ribonuclease PH (237 aa).

Phosphate-binding positions include R86 and 124–126 (GTR).

Belongs to the RNase PH family. Homohexameric ring arranged as a trimer of dimers.

It catalyses the reaction tRNA(n+1) + phosphate = tRNA(n) + a ribonucleoside 5'-diphosphate. Phosphorolytic 3'-5' exoribonuclease that plays an important role in tRNA 3'-end maturation. Removes nucleotide residues following the 3'-CCA terminus of tRNAs; can also add nucleotides to the ends of RNA molecules by using nucleoside diphosphates as substrates, but this may not be physiologically important. Probably plays a role in initiation of 16S rRNA degradation (leading to ribosome degradation) during starvation. The protein is Ribonuclease PH of Zymomonas mobilis subsp. mobilis (strain ATCC 31821 / ZM4 / CP4).